An 828-amino-acid chain; its full sequence is Periplasmic nitrate reductase (828 aa).

The segment at residues 1–31 (MKLSRRSFMKANAVAAAAAAAGLSVPGVARA) is a signal peptide (tat-type signal). One can recognise a 4Fe-4S Mo/W bis-MGD-type domain in the interval 39–95 (IKWDKAPCRFCGTGCGVLVGTQQGRVVACQGDPDAPVNRGLNCIKGYFLPKIMYGKD). [4Fe-4S] cluster is bound by residues cysteine 46, cysteine 49, cysteine 53, and cysteine 81. Mo-bis(molybdopterin guanine dinucleotide)-binding positions include lysine 83, glutamine 150, asparagine 175, cysteine 179, 212–219 (WGSNMAEM), 243–247 (STFQH), 262–264 (QSD), methionine 372, glutamine 376, asparagine 482, 508–509 (SD), lysine 531, aspartate 558, and 718–727 (TGRVLEHWHT). Residue phenylalanine 794 coordinates substrate. Mo-bis(molybdopterin guanine dinucleotide) contacts are provided by asparagine 802 and lysine 819.

The protein belongs to the prokaryotic molybdopterin-containing oxidoreductase family. NasA/NapA/NarB subfamily. Component of the periplasmic nitrate reductase NapAB complex composed of NapA and NapB. It depends on [4Fe-4S] cluster as a cofactor. Mo-bis(molybdopterin guanine dinucleotide) serves as cofactor. Post-translationally, predicted to be exported by the Tat system. The position of the signal peptide cleavage has not been experimentally proven.

It localises to the periplasm. It catalyses the reaction 2 Fe(II)-[cytochrome] + nitrate + 2 H(+) = 2 Fe(III)-[cytochrome] + nitrite + H2O. Its function is as follows. Catalytic subunit of the periplasmic nitrate reductase complex NapAB. Receives electrons from NapB and catalyzes the reduction of nitrate to nitrite. This chain is Periplasmic nitrate reductase, found in Salmonella agona (strain SL483).